Reading from the N-terminus, the 651-residue chain is Probable potassium transport system protein Kup (651 aa).

12 consecutive transmembrane segments (helical) span residues 30 to 50 (LALA…LYSL), 71 to 91 (IISM…VIFV), 124 to 144 (LLLG…TPAI), 158 to 178 (PDAE…LFIV), 190 to 210 (FGPV…PWII), 233 to 253 (AMAF…EALY), 268 to 288 (WFGL…AMIL), 310 to 330 (LVTI…SGAF), 358 to 378 (IYIP…ILIF), 387 to 407 (AYGL…LVLA), 413 to 433 (WPMW…LSIF), and 437 to 457 (LLKI…VVII).

The protein belongs to the HAK/KUP transporter (TC 2.A.72) family.

It localises to the cell membrane. The catalysed reaction is K(+)(in) + H(+)(in) = K(+)(out) + H(+)(out). In terms of biological role, transport of potassium into the cell. Likely operates as a K(+):H(+) symporter. This is Probable potassium transport system protein Kup from Cutibacterium acnes (strain DSM 16379 / KPA171202) (Propionibacterium acnes).